The sequence spans 112 residues: uncharacterized protein (112 aa).

Positions 39, 105, and 107 each coordinate Fe cation.

The protein belongs to the HesB/IscA family. Ycf83 subfamily.

The protein resides in the plastid. Its subcellular location is the chloroplast. This is an uncharacterized protein from Galdieria sulphuraria (Red alga).